A 96-amino-acid chain; its full sequence is Myosuppressin (96 aa).

A signal peptide spans Met1 to Cys24. Residues Ala25–Met80 constitute a propeptide that is removed on maturation. Position 83 is a pyrrolidone carboxylic acid; partial (Gln83). A Phenylalanine amide modification is found at Phe92. Arg96 is a propeptide.

This sequence belongs to the myosuppressin family. As to expression, expressed in corpora cardiaca (CC), corpora allata (CA), antennal lobe (AL) and gnathal ganglion (GNG) (at protein level). In its non-pyroglutamate form, expression in GNG detected in all animals, in AL, CC and in CA in most animals (at protein level). In its pyroglutamate form, expression in CC, CA and GNG detected in all animals, in AL in some animals (at protein level).

It is found in the secreted. Myoinhibiting neuropeptide. This is Myosuppressin from Agrotis ipsilon (Black cutworm moth).